Reading from the N-terminus, the 748-residue chain is MEHTYQYAWIIPFLPLPVPMLIGVGLLLVPRATKNLRRMWAFPSVLLLSIVMIFSADLSIQQLNGSSIYQYVWSWTINNDFSLEFGYLIDPLTSIMSILITTVGIMVLVYSDNYMSHDQGYLRFFAYMSFSNTSMLGLVTSSNLIQIYIFWELVGMCSYLLIGFWFTRPIAANACQKAFVTNRVGDFGLLLGILGLYWITGSFEFRDLFEIFNNLIYNNRVNSLFVTLCASLLFVGAVAKSAQFPLHIWLPDAMEGPTPISALIHAATMVAAGIFLVARLFPLFTVIPYIMNLISLIGIITVLLGATLALAQKDIKRSLAYSTMSQLGYTMLALGMGSYRAALFHLITHAYSKALLFLGSGSIIHSMETVVGYSPEKSQNMALMGGLTKYAPITKTAFLLGTLSLCGIPPLACFWSKDEILNDSWLYSPIFAIIACSTAGLTAFYMFRMYLLTFEGHLNVHFQNYSGKKNSSFYSISIWGKKETKTINIRKYFCLSTLSTMNDNEKDSYFLKKGYPIHGNVRSMARPLITISHFGNKETFPYPHESDNTMLLPLLVLVLFTLFVGFIGIPFDQEGMDLDILSKWLAPSINLLHPNLSNSVDWYEFITNAIFSVSIAYFGIFIASLLYRPVYSSFQNLELINFFVKMGPNRILWDQLLNIIYNWSYNRGYIDFFYAKTFIRGIRGLAELTHFFDRRVIDGITNGVGVTSFFVGEGIKYVGGGRISSYLFLYLSYVLIFLLISYFLFLNL.

16 helical membrane passes run 9–29, 40–60, 89–109, 121–140, 147–167, 185–205, 224–244, 258–278, 280–300, 327–347, 354–374, 396–416, 425–445, 551–571, 605–625, and 726–746; these read WIIPFLPLPVPMLIGVGLLLV, WAFPSVLLLSIVMIFSADLSI, IDPLTSIMSILITTVGIMVLV, YLRFFAYMSFSNTSMLGLVT, IYIFWELVGMCSYLLIGFWFT, GDFGLLLGILGLYWITGSFEF, LFVTLCASLLFVGAVAKSAQF, TPISALIHAATMVAAGIFLVA, LFPLFTVIPYIMNLISLIGII, LGYTMLALGMGSYRAALFHLI, ALLFLGSGSIIHSMETVVGYS, TAFLLGTLSLCGIPPLACFWS, WLYSPIFAIIACSTAGLTAFY, LLPLLVLVLFTLFVGFIGIPF, FITNAIFSVSIAYFGIFIASL, and YLFLYLSYVLIFLLISYFLFL.

The protein belongs to the complex I subunit 5 family. In terms of assembly, NDH is composed of at least 16 different subunits, 5 of which are encoded in the nucleus.

The protein resides in the plastid. Its subcellular location is the chloroplast thylakoid membrane. It catalyses the reaction a plastoquinone + NADH + (n+1) H(+)(in) = a plastoquinol + NAD(+) + n H(+)(out). The catalysed reaction is a plastoquinone + NADPH + (n+1) H(+)(in) = a plastoquinol + NADP(+) + n H(+)(out). In terms of biological role, NDH shuttles electrons from NAD(P)H:plastoquinone, via FMN and iron-sulfur (Fe-S) centers, to quinones in the photosynthetic chain and possibly in a chloroplast respiratory chain. The immediate electron acceptor for the enzyme in this species is believed to be plastoquinone. Couples the redox reaction to proton translocation, and thus conserves the redox energy in a proton gradient. This is NAD(P)H-quinone oxidoreductase subunit 5, chloroplastic (ndhF) from Platanus occidentalis (Sycamore).